The chain runs to 488 residues: Probable metabolite transport protein YBR241C (488 aa).

The Cytoplasmic segment spans residues 1-18; that stretch reads MAETERLMPNGGSRETKP. A helical membrane pass occupies residues 19 to 39; sequence LITGHLILGTIVACLGSIQYG. The Vacuolar segment spans residues 40–87; that stretch reads YHIAELNAPQEFLSCSRFEAPDENISYDDTWVGQHGLKQCIALTDSQY. The N-linked (GlcNAc...) asparagine glycan is linked to asparagine 63. Residues 88-108 form a helical membrane-spanning segment; that stretch reads GAITSIFSIGGLFGSYYAGNW. Topologically, residues 109 to 121 are cytoplasmic; sequence ANRYGRKYVSMGA. Residues 122-142 traverse the membrane as a helical segment; that stretch reads SAMCMVSSLLLFFSNSYLQLL. Over 143–146 the chain is Vacuolar; that stretch reads FGRF. The helical transmembrane segment at 147-167 threads the bilayer; it reads LVGMSCGTAIVITPLFINEIA. The Cytoplasmic portion of the chain corresponds to 168–178; sequence PVEWRGAMGSM. A helical membrane pass occupies residues 179 to 198; the sequence is NQVSINLGILLTQTLALKYA. At 199 to 204 the chain is on the vacuolar side; that stretch reads DSYNWR. A helical transmembrane segment spans residues 205-225; sequence WLLFSGSVIAVANILAWLKVD. Topologically, residues 226–299 are cytoplasmic; it reads ESPRWLVSHG…DPSYKKPRTV (74 aa). Over residues 258 to 279 the composition is skewed to basic and acidic residues; the sequence is EIQDWQRSHGHNRDPESSEETH. The segment at 258-281 is disordered; it reads EIQDWQRSHGHNRDPESSEETHSG. The chain crosses the membrane as a helical span at residues 300 to 320; sequence ILAILSCQQFCGINSIIFYGV. Residues 321 to 322 are Vacuolar-facing; it reads KV. A helical membrane pass occupies residues 323-337; it reads IGKILPDYSIQVNFA. The Cytoplasmic portion of the chain corresponds to 338-344; sequence ISILNVV. The helical transmembrane segment at 345-364 threads the bilayer; sequence VTLAASAIIDHVGRRPLLLA. The Vacuolar portion of the chain corresponds to 365 to 390; that stretch reads STTVMTAMSLLISVGLTLSVSFLLVT. The helical transmembrane segment at 391–411 threads the bilayer; the sequence is ATFVYIAAFAIGLGPIPFLII. The Cytoplasmic segment spans residues 412–419; sequence GELSYPQD. A helical transmembrane segment spans residues 420 to 442; it reads AATAQSFGTVCNWLATFIVGYLF. Topologically, residues 443–446 are vacuolar; it reads PIGH. Residues 447-463 form a helical membrane-spanning segment; the sequence is GLMGGYVFAIFAAIAAM. The Cytoplasmic portion of the chain corresponds to 464–488; sequence FATYVYKRVPETKGKTTYSEVWAGY.

The protein belongs to the major facilitator superfamily. Sugar transporter (TC 2.A.1.1) family.

The protein localises to the vacuole membrane. In Saccharomyces cerevisiae (strain ATCC 204508 / S288c) (Baker's yeast), this protein is Probable metabolite transport protein YBR241C.